The following is a 321-amino-acid chain: Phospho-N-acetylmuramoyl-pentapeptide-transferase (321 aa).

The next 10 membrane-spanning stretches (helical) occupy residues 1–21 (MLFILAVIALLITFILVPILI), 50–70 (MGGLTFLISIIITSIIAIFFV), 76–96 (IILLLFVTIGFGLIGFIDDYI), 112–132 (FLAQIAIAVVFFLLSDVFHLV), 140–160 (IPFTNISIPLSFAYVIFIVFW), 176–196 (GLATGLSIIGFTMYAIMSFVL), 200–220 (AIGAFCIIMIFALLGFLPYNL), 225–245 (VFMGDTGSLALGGIFATISIM), 250–270 (LSLLLIGLVFVIETASVMLQV), and 300–320 (VVTVFWTAGLISGLIGLWIGV).

This sequence belongs to the glycosyltransferase 4 family. MraY subfamily. It depends on Mg(2+) as a cofactor.

Its subcellular location is the cell membrane. The enzyme catalyses UDP-N-acetyl-alpha-D-muramoyl-L-alanyl-gamma-D-glutamyl-L-lysyl-D-alanyl-D-alanine + di-trans,octa-cis-undecaprenyl phosphate = Mur2Ac(oyl-L-Ala-gamma-D-Glu-L-Lys-D-Ala-D-Ala)-di-trans,octa-cis-undecaprenyl diphosphate + UMP. The protein operates within cell wall biogenesis; peptidoglycan biosynthesis. Functionally, catalyzes the initial step of the lipid cycle reactions in the biosynthesis of the cell wall peptidoglycan: transfers peptidoglycan precursor phospho-MurNAc-pentapeptide from UDP-MurNAc-pentapeptide onto the lipid carrier undecaprenyl phosphate, yielding undecaprenyl-pyrophosphoryl-MurNAc-pentapeptide, known as lipid I. The protein is Phospho-N-acetylmuramoyl-pentapeptide-transferase of Staphylococcus haemolyticus (strain JCSC1435).